Here is a 371-residue protein sequence, read N- to C-terminus: Putative F-box protein At1g58090 (371 aa).

The 46-residue stretch at 1–46 folds into the F-box domain; it reads MVSKKLPLDLEEEILFRVPPRSLVRFRSVCREWNTLFKNKRFINKN.

The sequence is that of Putative F-box protein At1g58090 from Arabidopsis thaliana (Mouse-ear cress).